A 375-amino-acid chain; its full sequence is tRNA (guanine(26)-N(2))-dimethyltransferase (375 aa).

A Trm1 methyltransferase domain is found at 2 to 368 (KYITEGNTKL…AKLIDIVEFI (367 aa)). 5 residues coordinate S-adenosyl-L-methionine: Arg-35, Arg-66, Asp-89, Asp-116, and Ala-117.

It belongs to the class I-like SAM-binding methyltransferase superfamily. Trm1 family.

The enzyme catalyses guanosine(26) in tRNA + 2 S-adenosyl-L-methionine = N(2)-dimethylguanosine(26) in tRNA + 2 S-adenosyl-L-homocysteine + 2 H(+). Dimethylates a single guanine residue at position 26 of a number of tRNAs using S-adenosyl-L-methionine as donor of the methyl groups. This Methanococcus aeolicus (strain ATCC BAA-1280 / DSM 17508 / OCM 812 / Nankai-3) protein is tRNA (guanine(26)-N(2))-dimethyltransferase.